The sequence spans 115 residues: Nitrogenase-stabilizing/protective protein NifW (115 aa).

The protein belongs to the NifW family. As to quaternary structure, homotrimer; associates with NifD.

Functionally, may protect the nitrogenase Fe-Mo protein from oxidative damage. The sequence is that of Nitrogenase-stabilizing/protective protein NifW from Methylobacterium sp. (strain 4-46).